A 449-amino-acid polypeptide reads, in one-letter code: MSITPPFLLACIDLRGAELTATQLRATLPRGGADVEAVLPTVWPIVQAVAECGADAALEFGALFDGVRPPTVRVPDAALDAALAGLDPDVRDALQVMIERTRVVHADQRRTDVTTALGPGATVTERWVPVERVGLYVPGGNAVYPSSVVMNVVPAQTAGVDSLVVASPPQFTSGGRFHGLPHPTILAAARLLGVDEVWAVGGAQAVALLAYGGTDSDDCELAPVDMITGPGNIYVTAAKRLCRSRVGIDGEAGPTEIAILADHTADPAHVAADMISQAEHDEMAASVLVTPSTDLADATDAELAAQLRTTVHRKRVVAALGGRQSAIILVDDLEAGVKVVNLYAAEHLEIQTAEASRVASRIRCAGAIFVGPWAPVSLGDYCAGSNHVLPTAGFARHSGGLSVQTFLRGIHVVNYTKTALKDISGHVITLAKAEDLPAHGEAVRRRFAR.

NAD(+) is bound by residues tyrosine 136, glutamine 204, and asparagine 232. Residues threonine 255, glutamine 277, and histidine 280 each contribute to the substrate site. The Zn(2+) site is built by glutamine 277 and histidine 280. Residues glutamate 346 and histidine 347 each act as proton acceptor in the active site. Substrate is bound by residues histidine 347, aspartate 380, glutamate 434, and histidine 439. Position 380 (aspartate 380) interacts with Zn(2+). A Zn(2+)-binding site is contributed by histidine 439.

It belongs to the histidinol dehydrogenase family. Requires Zn(2+) as cofactor.

The enzyme catalyses L-histidinol + 2 NAD(+) + H2O = L-histidine + 2 NADH + 3 H(+). It functions in the pathway amino-acid biosynthesis; L-histidine biosynthesis; L-histidine from 5-phospho-alpha-D-ribose 1-diphosphate: step 9/9. Its function is as follows. Catalyzes the sequential NAD-dependent oxidations of L-histidinol to L-histidinaldehyde and then to L-histidine. In Mycobacterium leprae (strain TN), this protein is Histidinol dehydrogenase (hisD).